A 313-amino-acid chain; its full sequence is Acetaldehyde dehydrogenase 3 (313 aa).

13–16 (SGNI) is an NAD(+) binding site. The active-site Acyl-thioester intermediate is C133. NAD(+)-binding positions include 164–172 (SAGPGTRAN) and N291.

It belongs to the acetaldehyde dehydrogenase family.

The enzyme catalyses acetaldehyde + NAD(+) + CoA = acetyl-CoA + NADH + H(+). The chain is Acetaldehyde dehydrogenase 3 from Paraburkholderia xenovorans (strain LB400).